The primary structure comprises 831 residues: MNIEQKWQQIWQEEKAFEVPNESSKPKYYVLEMLPYPSGKIHVGHVRNYSIGDVVARFMTMQGFNVLHPMGWDSFGLPAENAAIKNNSHPKEWTYSNIENMKKQLKSMGFSYDWSREINSCDPDYYKHEQKFFLELYERNLAYQKESLVNWDPVDNTVLANEQVVDGRGWRSGAIVEKRYLKQWFLKITNYAEELLNEIPNLTEWPEAVRSMQEKWIGKSVGANFRFKIKDNEDVIEVFSTKPETIFGASFVGIAFNHPIIEKLVSKTPEIENFIAKCSNITGSAEFDKAEKEGIFTGLYVVHPFDSNITLPVVITNFVLMDYGTGAVFGCPAHDQRDHELAVKINLPIKQVIEADTDVQKAAYTEDGIIINSGFLNGLSTNEAKQRVIEEFEKLGIGKRTINYRLKDWGISRQRFWGCPIPIIHCDSCGLVPVPDSDLPVTLPDDVKFDGHGNPLDNHPTWKHVNCPKCSKPAIRETDTFDTFFESSWYFTRYCNSQALEMTDKKACDYWLPVDKYIGGIEHAVMHLLYARFFTKVMNEQDYVSVREPFKGLFTQGMVLHATYKDEHNNWLYPEEVIKKGNEFFHKENGGLVTQGRIEKMSKSKKNLIDLETMQQQYGADAIRFFVLSDSPPEKDLEWSASGIEGSARFINKLEQMQETIIKLSDNKNTNKELKRLIHFTIKHVAEDIKHFALNRAIARMRELFNAISSEINKEEIDVQNAKHGFNVLIQLLNPFIPHITEEIWQKLGHKTFLYNAAFPTFDESMLELDTYVIAVQVNGKLRDTYEFNTSASEDEIKQIAINLPKVQKFLEGKEPKKIILVPKKIINIIC.

The 'HIGH' region motif lies at 35–45; the sequence is PYPSGKIHVGH. Residues 600 to 604 carry the 'KMSKS' region motif; sequence KMSKS. Lys603 contributes to the ATP binding site.

This sequence belongs to the class-I aminoacyl-tRNA synthetase family.

It is found in the cytoplasm. The catalysed reaction is tRNA(Leu) + L-leucine + ATP = L-leucyl-tRNA(Leu) + AMP + diphosphate. This Rickettsia bellii (strain RML369-C) protein is Leucine--tRNA ligase.